A 387-amino-acid polypeptide reads, in one-letter code: NAD(P)H oxidoreductase RTN4IP1, mitochondrial (387 aa).

A mitochondrion-targeting transit peptide spans 1 to 27 (MLMCRRWLVCSLRCHYRSFSFSAARRT). An Enoyl reductase (ER) domain is found at 38–379 (GKNDVLRFTK…QGHARGKTVV (342 aa)). Ser200, Gly202, Val203, Ser223, Tyr241, Leu286, Gly327, Phe329, His372, Ala373, and Arg374 together coordinate NADPH.

Belongs to the zinc-containing alcohol dehydrogenase family. Quinone oxidoreductase subfamily.

Its subcellular location is the mitochondrion matrix. It localises to the mitochondrion outer membrane. It catalyses the reaction a 3-demethylubiquinone + NADH + 2 H(+) = a 3-demethylubiquinol + NAD(+). It carries out the reaction a 3-demethylubiquinone + NADPH + 2 H(+) = a 3-demethylubiquinol + NADP(+). The enzyme catalyses 3-demethylubiquinone-10 + NADH + 2 H(+) = 3-demethylubiquinol-10 + NAD(+). The catalysed reaction is 3-demethylubiquinone-10 + NADPH + 2 H(+) = 3-demethylubiquinol-10 + NADP(+). It functions in the pathway cofactor biosynthesis; ubiquinone biosynthesis. Its function is as follows. NAD(P)H oxidoreductase involved in the ubiquinone biosynthetic pathway. Required for the O-methyltransferase activity of COQ3. Able to catalyze the oxidoreduction of 3-demethylubiquinone into 3-demethylubiquinol in vitro. However, it is unclear if 3-demethylubiquinone constitutes a substrate in vivo. May also play a role in the regulation of retinal ganglion cell (RGC) neurite outgrowth, and hence in the development of the inner retina and optic nerve. The chain is NAD(P)H oxidoreductase RTN4IP1, mitochondrial (rtn4ip1) from Danio rerio (Zebrafish).